We begin with the raw amino-acid sequence, 196 residues long: NADH-quinone oxidoreductase subunit C (196 aa).

Belongs to the complex I 30 kDa subunit family. NDH-1 is composed of 14 different subunits. Subunits NuoB, C, D, E, F, and G constitute the peripheral sector of the complex.

Its subcellular location is the cell inner membrane. The enzyme catalyses a quinone + NADH + 5 H(+)(in) = a quinol + NAD(+) + 4 H(+)(out). NDH-1 shuttles electrons from NADH, via FMN and iron-sulfur (Fe-S) centers, to quinones in the respiratory chain. The immediate electron acceptor for the enzyme in this species is believed to be ubiquinone. Couples the redox reaction to proton translocation (for every two electrons transferred, four hydrogen ions are translocated across the cytoplasmic membrane), and thus conserves the redox energy in a proton gradient. This is NADH-quinone oxidoreductase subunit C from Rickettsia bellii (strain RML369-C).